Reading from the N-terminus, the 205-residue chain is Dephospho-CoA kinase (205 aa).

The DPCK domain occupies 3–204 (KVGLTGGIGA…HRAHQPGESQ (202 aa)). 11 to 16 (GAGKSE) provides a ligand contact to ATP.

Belongs to the CoaE family.

It localises to the cytoplasm. It carries out the reaction 3'-dephospho-CoA + ATP = ADP + CoA + H(+). The protein operates within cofactor biosynthesis; coenzyme A biosynthesis; CoA from (R)-pantothenate: step 5/5. Catalyzes the phosphorylation of the 3'-hydroxyl group of dephosphocoenzyme A to form coenzyme A. This is Dephospho-CoA kinase from Streptomyces avermitilis (strain ATCC 31267 / DSM 46492 / JCM 5070 / NBRC 14893 / NCIMB 12804 / NRRL 8165 / MA-4680).